Consider the following 334-residue polypeptide: Adenosine deaminase (334 aa).

Residues histidine 12 and histidine 14 each contribute to the Zn(2+) site. Substrate is bound by residues histidine 14, aspartate 16, and glycine 170. Residue histidine 197 participates in Zn(2+) binding. The active-site Proton donor is glutamate 200. A Zn(2+)-binding site is contributed by aspartate 278. Aspartate 279 lines the substrate pocket.

It belongs to the metallo-dependent hydrolases superfamily. Adenosine and AMP deaminases family. Adenosine deaminase subfamily. Zn(2+) is required as a cofactor.

The enzyme catalyses adenosine + H2O + H(+) = inosine + NH4(+). The catalysed reaction is 2'-deoxyadenosine + H2O + H(+) = 2'-deoxyinosine + NH4(+). Its function is as follows. Catalyzes the hydrolytic deamination of adenosine and 2-deoxyadenosine. The chain is Adenosine deaminase from Vibrio parahaemolyticus serotype O3:K6 (strain RIMD 2210633).